The primary structure comprises 247 residues: PF03932 family protein CutC (247 aa).

This sequence belongs to the CutC family.

It localises to the cytoplasm. The chain is PF03932 family protein CutC from Aliivibrio fischeri (strain MJ11) (Vibrio fischeri).